We begin with the raw amino-acid sequence, 388 residues long: Chalcone synthase LF3 (388 aa).

Residue Cys164 is part of the active site.

This sequence belongs to the thiolase-like superfamily. Chalcone/stilbene synthases family.

The catalysed reaction is (E)-4-coumaroyl-CoA + 3 malonyl-CoA + 3 H(+) = 2',4,4',6'-tetrahydroxychalcone + 3 CO2 + 4 CoA. Its pathway is secondary metabolite biosynthesis; flavonoid biosynthesis. Functionally, the primary product of this enzyme is 4,2',4',6'-tetrahydroxychalcone (also termed naringenin-chalcone or chalcone) which can under specific conditions spontaneously isomerize into naringenin. The sequence is that of Chalcone synthase LF3 (CHS-LF3) from Ipomoea batatas (Sweet potato).